Reading from the N-terminus, the 237-residue chain is Phosphoribosylaminoimidazole-succinocarboxamide synthase (237 aa).

It belongs to the SAICAR synthetase family.

The enzyme catalyses 5-amino-1-(5-phospho-D-ribosyl)imidazole-4-carboxylate + L-aspartate + ATP = (2S)-2-[5-amino-1-(5-phospho-beta-D-ribosyl)imidazole-4-carboxamido]succinate + ADP + phosphate + 2 H(+). The protein operates within purine metabolism; IMP biosynthesis via de novo pathway; 5-amino-1-(5-phospho-D-ribosyl)imidazole-4-carboxamide from 5-amino-1-(5-phospho-D-ribosyl)imidazole-4-carboxylate: step 1/2. This chain is Phosphoribosylaminoimidazole-succinocarboxamide synthase, found in Cronobacter sakazakii (strain ATCC BAA-894) (Enterobacter sakazakii).